We begin with the raw amino-acid sequence, 250 residues long: 5'/3'-nucleotidase SurE (250 aa).

Positions 8, 9, 39, and 92 each coordinate a divalent metal cation.

Belongs to the SurE nucleotidase family. Requires a divalent metal cation as cofactor.

It is found in the cytoplasm. It catalyses the reaction a ribonucleoside 5'-phosphate + H2O = a ribonucleoside + phosphate. The enzyme catalyses a ribonucleoside 3'-phosphate + H2O = a ribonucleoside + phosphate. The catalysed reaction is [phosphate](n) + H2O = [phosphate](n-1) + phosphate + H(+). Functionally, nucleotidase with a broad substrate specificity as it can dephosphorylate various ribo- and deoxyribonucleoside 5'-monophosphates and ribonucleoside 3'-monophosphates with highest affinity to 3'-AMP. Also hydrolyzes polyphosphate (exopolyphosphatase activity) with the preference for short-chain-length substrates (P20-25). Might be involved in the regulation of dNTP and NTP pools, and in the turnover of 3'-mononucleotides produced by numerous intracellular RNases (T1, T2, and F) during the degradation of various RNAs. The polypeptide is 5'/3'-nucleotidase SurE (Wigglesworthia glossinidia brevipalpis).